Consider the following 680-residue polypeptide: Methionine--tRNA ligase (680 aa).

Positions 15–25 (PYANGSIHLGH) match the 'HIGH' region motif. Zn(2+) contacts are provided by cysteine 146, cysteine 149, cysteine 159, and cysteine 162. The short motif at 332 to 336 (KMSKS) is the 'KMSKS' region element. Lysine 335 is an ATP binding site. A tRNA-binding domain is found at 579–680 (DFAKVDMRIA…EGAQPGMRVM (102 aa)).

Belongs to the class-I aminoacyl-tRNA synthetase family. MetG type 1 subfamily. Homodimer. Zn(2+) serves as cofactor.

The protein localises to the cytoplasm. It carries out the reaction tRNA(Met) + L-methionine + ATP = L-methionyl-tRNA(Met) + AMP + diphosphate. Its function is as follows. Is required not only for elongation of protein synthesis but also for the initiation of all mRNA translation through initiator tRNA(fMet) aminoacylation. This chain is Methionine--tRNA ligase, found in Photobacterium profundum (strain SS9).